Here is a 393-residue protein sequence, read N- to C-terminus: Pigment production hydroxylase (393 aa).

Involved in pigment production acting as a hydroxylase that transforms indole to indoxyl, resulting in the formation of indigo. This is Pigment production hydroxylase from Rhodococcus erythropolis (Arthrobacter picolinophilus).